The following is a 269-amino-acid chain: 3-methyl-2-oxobutanoate hydroxymethyltransferase (269 aa).

Mg(2+) is bound by residues aspartate 52 and aspartate 91. Residues 52 to 53, aspartate 91, and lysine 121 contribute to the 3-methyl-2-oxobutanoate site; that span reads DT. Position 123 (glutamate 123) interacts with Mg(2+). Glutamate 186 (proton acceptor) is an active-site residue.

The protein belongs to the PanB family. In terms of assembly, homodecamer; pentamer of dimers. The cofactor is Mg(2+).

The protein localises to the cytoplasm. It catalyses the reaction 3-methyl-2-oxobutanoate + (6R)-5,10-methylene-5,6,7,8-tetrahydrofolate + H2O = 2-dehydropantoate + (6S)-5,6,7,8-tetrahydrofolate. Its pathway is cofactor biosynthesis; (R)-pantothenate biosynthesis; (R)-pantoate from 3-methyl-2-oxobutanoate: step 1/2. Functionally, catalyzes the reversible reaction in which hydroxymethyl group from 5,10-methylenetetrahydrofolate is transferred onto alpha-ketoisovalerate to form ketopantoate. This is 3-methyl-2-oxobutanoate hydroxymethyltransferase from Rhodopirellula baltica (strain DSM 10527 / NCIMB 13988 / SH1).